A 178-amino-acid chain; its full sequence is Extracellular fatty acid-binding protein (178 aa).

Residues 1–20 (MRTLALSLALALLCLLHTEA) form the signal peptide. A Blocked amino end (Ala) modification is found at Ala21. Thr43 is a binding site for enterobactin. The 1-tetradecanoyl-sn-glycerol 3-phosphate site is built by Tyr72 and Lys104. A disulfide bridge connects residues Cys80 and Cys173. Positions 104, 123, and 134 each coordinate enterobactin. 134 to 136 (RLY) is a binding site for 1-tetradecanoyl-sn-glycerol 3-phosphate.

This sequence belongs to the calycin superfamily. Lipocalin family. In terms of assembly, monomer. In terms of processing, does not seem to be glycosylated. In terms of tissue distribution, expressed in egg white (at protein level). Expressed in the magnum of the oviduct (at protein level). Preferentially synthesized in nonproliferating cells.

It localises to the secreted. Functionally, siderocalin-like lipocalin tightly binding a variety of bacterial ferric siderophores, also binds long-chain unsaturated fatty acids such as linoleic acid, oleic acid, arachidonic acid and, with a lower affinity, long chain saturated fatty acids such as steraic acid. May act as an antibacterial factor, through dual ligand specificity, both as a siderophore-sequestrating molecule and a lysophosphatidic acid (LPA) sensor. The protein is Extracellular fatty acid-binding protein (EXFABP) of Gallus gallus (Chicken).